Consider the following 374-residue polypeptide: Guanine nucleotide-binding protein subunit alpha-15 (374 aa).

Residues 41–374 (GELKLLLLGT…ARYLDEINLL (334 aa)) enclose the G-alpha domain. Residues 44 to 57 (KLLLLGTGESGKST) form a G1 motif region. GTP is bound by residues 49–56 (GTGESGKS), 183–189 (LRSRMPT), 208–212 (DVGGQ), 277–280 (NKTD), and Ala346. Mg(2+) is bound by residues Ser56 and Thr189. The tract at residues 181–189 (DVLRSRMPT) is G2 motif. The interval 204-213 (LRIVDVGGQK) is G3 motif. The interval 273 to 280 (ILFLNKTD) is G4 motif. The segment at 344–349 (TCATDT) is G5 motif.

The protein belongs to the G-alpha family. G(q) subfamily. G proteins are composed of 3 units; alpha, beta and gamma. The alpha chain contains the guanine nucleotide binding site.

In terms of biological role, guanine nucleotide-binding proteins (G proteins) are involved as modulators or transducers in various transmembrane signaling systems. This Oryctolagus cuniculus (Rabbit) protein is Guanine nucleotide-binding protein subunit alpha-15 (GNA15).